The chain runs to 627 residues: Protein fem-1 homolog B (627 aa).

ANK repeat units follow at residues 45–74, 87–116, 120–149, and 153–182; these read QRSTPLIIAARNGHAKVVRLLLEHYRVQTQ, DGATALWCAAGAGHFEVVKLLVSHGANVNH, TNSTPLRAACFDGRLDIVKYLVENNANISI, and YDNTCLMIAAYKGHTDVVRYLLEQRADPNA. Residues His-185, Cys-186, and His-218 each contribute to the Zn(2+) site. ANK repeat units follow at residues 186–215 and 218–248; these read CGATALHFAAEAGHIDIVKELIKWRAAIVV and HGMTPLKVAAESCKADVVELLLSHADCDRRS. Residues 344–377 form a TPR repeat; that stretch reads SHPIIYRGAVYADNMEFEQCIKLWLHALHLRQKG. 2 ANK repeats span residues 483-527 and 531-568; these read EGFT…EVNA and EGNSALHIIVQYNRPISDFLTLHSIIISLVEAGAHTDM.

The protein belongs to the fem-1 family. As to quaternary structure, component of a CRL2 E3 ubiquitin-protein ligase complex, also named ECS (Elongin BC-CUL2/5-SOCS-box protein) complex, composed of CUL2, Elongin BC (ELOB and ELOC), RBX1 and substrate-specific adapter FEM1B. Homooligomer. Interacts with PPM1F and PHTF1. Interacts with the death domain of FAS/TNFRSF6 and TNFRSF1A. Interacts with CHEK1. Interacts with NKX3-1. Widely expressed. Highly expressed in testis. Weakly expressed in other tissues.

The protein localises to the cytoplasm. It localises to the nucleus. Its pathway is protein modification; protein ubiquitination. Activity of the CRL2(FEM1B) complex toward FNIP1 is inhibited by BEX family proteins (BEX1, BEX2, BEX3, BEX4 and/or BEX5) in absence of reductive stress. Mechanistically, BEX proteins act as pseudosubstrate inhibitors that associate with FEM1B via zinc in absence of reductive stress, thereby preventing association between FEM1B and FNIP1. Functionally, substrate-recognition component of a Cul2-RING (CRL2) E3 ubiquitin-protein ligase complex of the DesCEND (destruction via C-end degrons) pathway, which recognizes a C-degron located at the extreme C terminus of target proteins, leading to their ubiquitination and degradation. The C-degron recognized by the DesCEND pathway is usually a motif of less than ten residues and can be present in full-length proteins, truncated proteins or proteolytically cleaved forms. The CRL2(FEM1B) complex specifically recognizes proteins ending with -Gly-Leu-Asp-Arg, such as CDK5R1, leading to their ubiquitination and degradation. Also acts as a regulator of the reductive stress response by mediating ubiquitination of reduced FNIP1: in response to reductive stress, the CRL2(FEM1B) complex specifically recognizes a conserved Cys degron in FNIP1 when this degron is reduced, leading to FNIP1 degradation and subsequent activation of mitochondria to recalibrate reactive oxygen species (ROS). Mechanistically, recognizes and binds reduced FNIP1 through two interface zinc ions, which act as a molecular glue that recruit reduced FNIP1 to FEM1B. Promotes ubiquitination of GLI1, suppressing GLI1 transcriptional activator activity. Promotes ubiquitination and degradation of ANKRD37. Promotes ubiquitination and degradation of SLBP. Involved in apoptosis by acting as a death receptor-associated protein that mediates apoptosis. Also involved in glucose homeostasis in pancreatic islet. May also act as an adapter/mediator in replication stress-induced signaling that leads to the activation of CHEK1. This is Protein fem-1 homolog B from Homo sapiens (Human).